The sequence spans 240 residues: Methylthioribulose-1-phosphate dehydratase (240 aa).

Residue Cys-100 coordinates substrate. Residues His-117 and His-119 each coordinate Zn(2+). The Proton donor/acceptor role is filled by Glu-146. Zn(2+) is bound at residue His-202.

Belongs to the aldolase class II family. MtnB subfamily. Zn(2+) is required as a cofactor.

Its subcellular location is the cytoplasm. The catalysed reaction is 5-(methylsulfanyl)-D-ribulose 1-phosphate = 5-methylsulfanyl-2,3-dioxopentyl phosphate + H2O. Its pathway is amino-acid biosynthesis; L-methionine biosynthesis via salvage pathway; L-methionine from S-methyl-5-thio-alpha-D-ribose 1-phosphate: step 2/6. In terms of biological role, catalyzes the dehydration of methylthioribulose-1-phosphate (MTRu-1-P) into 2,3-diketo-5-methylthiopentyl-1-phosphate (DK-MTP-1-P). This is Methylthioribulose-1-phosphate dehydratase from Emericella nidulans (strain FGSC A4 / ATCC 38163 / CBS 112.46 / NRRL 194 / M139) (Aspergillus nidulans).